Reading from the N-terminus, the 355-residue chain is 3-dehydroquinate synthase (355 aa).

NAD(+)-binding positions include 105–109, 129–130, lysine 142, lysine 151, and 169–172; these read GVVGD, TS, and TLKT. The Zn(2+) site is built by glutamate 184, histidine 246, and histidine 263.

Belongs to the sugar phosphate cyclases superfamily. Dehydroquinate synthase family. NAD(+) is required as a cofactor. Requires Co(2+) as cofactor. It depends on Zn(2+) as a cofactor.

It is found in the cytoplasm. The enzyme catalyses 7-phospho-2-dehydro-3-deoxy-D-arabino-heptonate = 3-dehydroquinate + phosphate. It participates in metabolic intermediate biosynthesis; chorismate biosynthesis; chorismate from D-erythrose 4-phosphate and phosphoenolpyruvate: step 2/7. In terms of biological role, catalyzes the conversion of 3-deoxy-D-arabino-heptulosonate 7-phosphate (DAHP) to dehydroquinate (DHQ). The sequence is that of 3-dehydroquinate synthase from Streptococcus agalactiae serotype V (strain ATCC BAA-611 / 2603 V/R).